The chain runs to 398 residues: Bone morphogenetic protein 2-A (398 aa).

The signal sequence occupies residues 1 to 23 (MVAGIHSLLLLLFYQVLLSGCTG). Positions 24–284 (LIPEEGKRKY…GHALHKRQKR (261 aa)) are excised as a propeptide. Asn-137, Asn-202, and Asn-340 each carry an N-linked (GlcNAc...) asparagine glycan. Disulfide bonds link Cys-298/Cys-363, Cys-327/Cys-395, and Cys-331/Cys-397.

The protein belongs to the TGF-beta family. As to quaternary structure, homodimer; disulfide-linked.

The protein resides in the secreted. In terms of biological role, induces cartilage and bone formation. The sequence is that of Bone morphogenetic protein 2-A (bmp2-a) from Xenopus laevis (African clawed frog).